Here is a 361-residue protein sequence, read N- to C-terminus: Flagellar P-ring protein (361 aa).

An N-terminal signal peptide occupies residues 1–18; it reads MRKFTILLMLLLASSAQA.

The protein belongs to the FlgI family. In terms of assembly, the basal body constitutes a major portion of the flagellar organelle and consists of four rings (L,P,S, and M) mounted on a central rod.

The protein localises to the periplasm. Its subcellular location is the bacterial flagellum basal body. In terms of biological role, assembles around the rod to form the L-ring and probably protects the motor/basal body from shearing forces during rotation. The chain is Flagellar P-ring protein from Vibrio cholerae serotype O1 (strain ATCC 39541 / Classical Ogawa 395 / O395).